The following is a 510-amino-acid chain: Inositol-3-phosphate synthase 1 (510 aa).

24 residues coordinate NAD(+): Gly70, Gly71, Asn72, Asn73, Asp143, Ile180, Gln190, Arg193, Thr230, Ala231, Asn232, Thr233, Gly281, Ser282, Asp306, Ser309, Asn340, Asn341, Asp342, Lys355, Gly393, Asp394, Asp422, and Ser423.

It belongs to the myo-inositol 1-phosphate synthase family. Requires NAD(+) as cofactor.

Its subcellular location is the cytoplasm. The protein resides in the cytosol. It localises to the nucleus. The catalysed reaction is D-glucose 6-phosphate = 1D-myo-inositol 3-phosphate. Its pathway is polyol metabolism; myo-inositol biosynthesis; myo-inositol from D-glucose 6-phosphate: step 1/2. In terms of biological role, key enzyme in myo-inositol biosynthesis pathway that catalyzes the conversion of glucose 6-phosphate to 1-myo-inositol 1-phosphate in a NAD-dependent manner. May play a role in oxidative stress resistance and influences ascorbate levels. The sequence is that of Inositol-3-phosphate synthase 1 from Populus euphratica (Euphrates poplar).